A 217-amino-acid chain; its full sequence is 3,4-dihydroxy-2-butanone 4-phosphate synthase (217 aa).

D-ribulose 5-phosphate-binding positions include 37 to 38 (RE), Asp-42, 150 to 154 (RRGHT), and Glu-174. Glu-38 serves as a coordination point for Mg(2+). Mg(2+) is bound at residue His-153.

This sequence belongs to the DHBP synthase family. As to quaternary structure, homodimer. Mg(2+) is required as a cofactor. The cofactor is Mn(2+).

The catalysed reaction is D-ribulose 5-phosphate = (2S)-2-hydroxy-3-oxobutyl phosphate + formate + H(+). It participates in cofactor biosynthesis; riboflavin biosynthesis; 2-hydroxy-3-oxobutyl phosphate from D-ribulose 5-phosphate: step 1/1. Catalyzes the conversion of D-ribulose 5-phosphate to formate and 3,4-dihydroxy-2-butanone 4-phosphate. This is 3,4-dihydroxy-2-butanone 4-phosphate synthase from Yersinia pseudotuberculosis serotype O:1b (strain IP 31758).